The chain runs to 20 residues: Calreticulin (20 aa).

Belongs to the calreticulin family. Post-translationally, glycosylated.

The protein resides in the endoplasmic reticulum lumen. Molecular calcium-binding chaperone promoting folding, oligomeric assembly and quality control in the ER via the calreticulin/calnexin cycle. This lectin may interact transiently with almost all of the monoglucosylated glycoproteins that are synthesized in the ER. The sequence is that of Calreticulin from Spinacia oleracea (Spinach).